Reading from the N-terminus, the 898-residue chain is MLRVALLLLPGLPLAGVGATEEPTQEPGPLGEPPGLALFRWQWHEVEAPYLVALWILVASLAKIVFHLSRKVTSLVPESCLLILLGLALGGIVLAVAKKAEYQLEPGTFFLFLLPPIVLDSGYFMPSRLFFDNLGAILTYAVVGTLWNAFTTGVALWGLQQAGLVAPRVQAGLLDFLLFGSLISAVDPVAVLAVFEEVHVNETLFIIVFGESLLNDAVTVVLYKVCNSFVEMGSANVQATDYLKGVASLFVVSLGGAAVGLVFAFLLALTTRFTKRVRIIEPLLVFLLAYAAYLTAEMASLSAILAVTMCGLGCKKYVEANISHKSRTAVKYTMKTLASSAETVIFMLLGISAVDSSKWAWDSGLVLGTLFFILFFRALGVVLQTWVLNQFRLVPLDKIDQVVMSYGGLRGAVAFALVILLDRTKVPAKDYFVATTIVVVFFTVIVQGLTIKPLVKWLRVKRSDYHKPTLNQELHEHTFDHILAAVEDVVGHHGYHYWRDRWEQFDKKYLSQLLMRRSAYRIRDQIWDVYYRLNIRDAISFVDQGGHVLSSAGLTLPSMPSRNSVAETSVTNLLRESGSGACLDLQVIDTVRSGRDREDAVMHHLLCGGLYKPRRRYKASCSRHFISEDAQERQDKEVFQQNMKRRLESFKSTKHNICFTKSKPRPRKTGHKKKDGVANPEATNGKPPRDLGFQDTAAVILTVESEEEEESESSETEKEDDEGIIFVARATSEVLQEGKVSGSLEVCPSPRIIPPSPTCAEKELPWKSGQGDLAVYVSSETTKIVPVDMQTGWNQSISSLESLASPPCTQPPTLTRLPPHPLVPEEPQVPLDLSSDPRSSFAFPPSLAKAGRSRSESSADIPQQQELQPLMGHKDHTHLSPGPANSHWCIQFNRGGRL.

Over 1–3 (MLR) the chain is Cytoplasmic. Residues 4–24 (VALLLLPGLPLAGVGATEEPT) traverse the membrane as a helical segment. Topologically, residues 25–47 (QEPGPLGEPPGLALFRWQWHEVE) are extracellular. Residues 48–68 (APYLVALWILVASLAKIVFHL) traverse the membrane as a helical segment. At 69–75 (SRKVTSL) the chain is on the cytoplasmic side. Residues 76-96 (VPESCLLILLGLALGGIVLAV) traverse the membrane as a helical segment. Topologically, residues 97–136 (AKKAEYQLEPGTFFLFLLPPIVLDSGYFMPSRLFFDNLGA) are extracellular. Residues 137–157 (ILTYAVVGTLWNAFTTGVALW) form a helical membrane-spanning segment. The Cytoplasmic portion of the chain corresponds to 158–175 (GLQQAGLVAPRVQAGLLD). A helical transmembrane segment spans residues 176-196 (FLLFGSLISAVDPVAVLAVFE). Topologically, residues 197–202 (EVHVNE) are extracellular. N-linked (GlcNAc...) asparagine glycosylation occurs at asparagine 201. Residues 203-223 (TLFIIVFGESLLNDAVTVVLY) form a helical membrane-spanning segment. Over 224-248 (KVCNSFVEMGSANVQATDYLKGVAS) the chain is Cytoplasmic. Residues 249-269 (LFVVSLGGAAVGLVFAFLLAL) traverse the membrane as a helical segment. Over 270 to 278 (TTRFTKRVR) the chain is Extracellular. Residues 279–299 (IIEPLLVFLLAYAAYLTAEMA) form a helical membrane-spanning segment. Topologically, residues 300 to 333 (SLSAILAVTMCGLGCKKYVEANISHKSRTAVKYT) are cytoplasmic. Residues 334-354 (MKTLASSAETVIFMLLGISAV) form a helical membrane-spanning segment. The Extracellular portion of the chain corresponds to 355-362 (DSSKWAWD). A helical membrane pass occupies residues 363–383 (SGLVLGTLFFILFFRALGVVL). Residues 384–400 (QTWVLNQFRLVPLDKID) lie on the Cytoplasmic side of the membrane. Residues 401–421 (QVVMSYGGLRGAVAFALVILL) form a helical membrane-spanning segment. The Extracellular portion of the chain corresponds to 422-430 (DRTKVPAKD). Residues 431-451 (YFVATTIVVVFFTVIVQGLTI) traverse the membrane as a helical segment. The Cytoplasmic portion of the chain corresponds to 452–898 (KPLVKWLRVK…CIQFNRGGRL (447 aa)). Disordered regions lie at residues 660 to 692 (TKSK…RDLG) and 801 to 888 (ESLA…NSHW). Residues 662–674 (SKPRPRKTGHKKK) show a composition bias toward basic residues. Over residues 856–867 (ESSADIPQQQEL) the composition is skewed to polar residues.

It belongs to the monovalent cation:proton antiporter 1 (CPA1) transporter (TC 2.A.36) family. In terms of assembly, interacts with CHP1 and CHP2. Interacts with ARRB2; facilitates the endocytosis of SLC9A5 from the plasma membrane. Interacts with RACK1; this interaction positively regulates SLC9A5 activity and promotes SLC9A5 localization to focal adhesions. Interacts with SCAMP2; this interaction regulates SLC9A5 cell-surface targeting and SLC9A5 activity. Post-translationally, phosphorylated by PRKAA2; promotes its accumulation at the cell surface. Phosphorylated by CSNK2A1 in a manner favoring its beta-arrestin binding and endocytosis. As to expression, highly expressed in brain. Strongly expressed in the dentate gyrus.

The protein resides in the cell membrane. It is found in the recycling endosome membrane. It localises to the cell projection. Its subcellular location is the dendritic spine membrane. The protein localises to the synaptic cell membrane. The protein resides in the cell junction. It is found in the focal adhesion. The catalysed reaction is Na(+)(in) + H(+)(out) = Na(+)(out) + H(+)(in). Functionally, plasma membrane Na(+)/H(+) antiporter. Mediates the electroneutral exchange of intracellular H(+) ions for extracellular Na(+) in 1:1 stoichiometry. Responsible for regulating intracellular pH homeostasis, in particular in neural tissues. Acts as a negative regulator of dendritic spine growth. Plays a role in postsynaptic remodeling and signaling. Can also contribute to organellar pH regulation, with consequences for receptor tyrosine kinase trafficking. This Rattus norvegicus (Rat) protein is Sodium/hydrogen exchanger 5 (Slc9a5).